The sequence spans 121 residues: uncharacterized protein (121 aa).

The helical transmembrane segment at 65 to 84 (TILFYTPTLICFLFLQNFLY) threads the bilayer.

Its subcellular location is the membrane. This is an uncharacterized protein from Saccharomyces cerevisiae (strain ATCC 204508 / S288c) (Baker's yeast).